The chain runs to 211 residues: Large ribosomal subunit protein uL4 (211 aa).

Positions 41-87 are disordered; it reads QAHARQGTASTLTRSEVRGGGRKPYKQKGTGRARQGSIRTPLRPGGG. Residues 60–71 are compositionally biased toward basic residues; the sequence is GGRKPYKQKGTG.

The protein belongs to the universal ribosomal protein uL4 family. Part of the 50S ribosomal subunit.

Its function is as follows. One of the primary rRNA binding proteins, this protein initially binds near the 5'-end of the 23S rRNA. It is important during the early stages of 50S assembly. It makes multiple contacts with different domains of the 23S rRNA in the assembled 50S subunit and ribosome. Forms part of the polypeptide exit tunnel. This Parasynechococcus marenigrum (strain WH8102) protein is Large ribosomal subunit protein uL4.